Reading from the N-terminus, the 621-residue chain is Probable potassium transport system protein Kup 2 (621 aa).

A run of 12 helical transmembrane segments spans residues 12–32, 52–72, 101–121, 138–158, 166–186, 213–233, 249–269, 286–306, 338–358, 370–390, 396–416, and 420–440; these read ITVA…LYAL, VLSL…VAII, WIIT…SMIT, PDLK…LFFI, VGKL…ILGL, GLAF…EALY, FGFV…LLLI, ALIP…QAVI, IYVP…VIGF, IAVT…MVLM, LLVA…FAAN, and IPEG…VLTT.

Belongs to the HAK/KUP transporter (TC 2.A.72) family.

Its subcellular location is the cell inner membrane. It carries out the reaction K(+)(in) + H(+)(in) = K(+)(out) + H(+)(out). Transport of potassium into the cell. Likely operates as a K(+):H(+) symporter. This is Probable potassium transport system protein Kup 2 from Dechloromonas aromatica (strain RCB).